The primary structure comprises 172 residues: Putative methyltransferase Mtx subunit A (172 aa).

The protein belongs to the MtrA family. In terms of assembly, may be part of a complex composed of 3 subunits; MtxA, MtxH and MtxX.

The chain is Putative methyltransferase Mtx subunit A (mtxA) from Methanosarcina mazei (strain ATCC BAA-159 / DSM 3647 / Goe1 / Go1 / JCM 11833 / OCM 88) (Methanosarcina frisia).